The chain runs to 316 residues: Fe-S cluster assembly protein DRE2 (316 aa).

The tract at residues 7–139 (VSPPKRTLLL…PDYGDNEGAV (133 aa)) is N-terminal SAM-like domain. Residues 140–208 (TLKFGLKKKN…EDTLMTEEDL (69 aa)) are linker. [2Fe-2S] cluster contacts are provided by Cys218, Cys229, Cys232, and Cys234. The interval 218–234 (CQPKAGKRRRACKDCSC) is fe-S binding site A. Cys279, Cys282, Cys290, and Cys293 together coordinate [4Fe-4S] cluster. 2 short sequence motifs (cx2C motif) span residues 279-282 (CGNC) and 290-293 (CDGC). Residues 279–293 (CGNCSLGDAFRCDGC) form a fe-S binding site B region.

Belongs to the anamorsin family. Monomer. Interacts with TAH18. Interacts with MIA40. [2Fe-2S] cluster is required as a cofactor. It depends on [4Fe-4S] cluster as a cofactor.

The protein resides in the cytoplasm. The protein localises to the mitochondrion intermembrane space. In terms of biological role, component of the cytosolic iron-sulfur (Fe-S) protein assembly (CIA) machinery required for the maturation of extramitochondrial Fe-S proteins. Part of an electron transfer chain functioning in an early step of cytosolic Fe-S biogenesis, facilitating the de novo assembly of a [4Fe-4S] cluster on the scaffold complex CFD1-NBP35. Electrons are transferred to DRE2 from NADPH via the FAD- and FMN-containing protein TAH18. TAH18-DRE2 are also required for the assembly of the diferric tyrosyl radical cofactor of ribonucleotide reductase (RNR), probably by providing electrons for reduction during radical cofactor maturation in the catalytic small subunit RNR2. This Fusarium vanettenii (strain ATCC MYA-4622 / CBS 123669 / FGSC 9596 / NRRL 45880 / 77-13-4) (Fusarium solani subsp. pisi) protein is Fe-S cluster assembly protein DRE2.